The following is a 343-amino-acid chain: L-threonine 3-dehydrogenase (343 aa).

A Zn(2+)-binding site is contributed by Cys38. Catalysis depends on charge relay system residues Thr40 and His43. Residues His63, Glu64, Cys93, Cys96, Cys99, and Cys107 each coordinate Zn(2+). NAD(+) contacts are provided by residues Ile175, Asp195, Arg200, 262–264 (LGL), and 286–287 (IY).

This sequence belongs to the zinc-containing alcohol dehydrogenase family. As to quaternary structure, homotetramer. Zn(2+) is required as a cofactor.

It is found in the cytoplasm. The catalysed reaction is L-threonine + NAD(+) = (2S)-2-amino-3-oxobutanoate + NADH + H(+). It participates in amino-acid degradation; L-threonine degradation via oxydo-reductase pathway; glycine from L-threonine: step 1/2. Its function is as follows. Catalyzes the NAD(+)-dependent oxidation of L-threonine to 2-amino-3-ketobutyrate. The polypeptide is L-threonine 3-dehydrogenase (Saccharopolyspora erythraea (strain ATCC 11635 / DSM 40517 / JCM 4748 / NBRC 13426 / NCIMB 8594 / NRRL 2338)).